A 189-amino-acid polypeptide reads, in one-letter code: Putative manganese efflux pump MntP (189 aa).

A run of 6 helical transmembrane segments spans residues 2–22 (SLTE…AVSI), 36–56 (ILQM…IGYY), 71–91 (WIAF…SITA), 106–126 (LLLV…VSLS), 132–152 (ILYS…AAIL), and 167–187 (IVGG…HMFF).

The protein belongs to the MntP (TC 9.B.29) family.

The protein localises to the cell membrane. Probably functions as a manganese efflux pump. This Ruminiclostridium cellulolyticum (strain ATCC 35319 / DSM 5812 / JCM 6584 / H10) (Clostridium cellulolyticum) protein is Putative manganese efflux pump MntP.